Here is a 484-residue protein sequence, read N- to C-terminus: tRNA sulfurtransferase (484 aa).

Positions 63-167 (EAFAERLACI…KESLYLVSKR (105 aa)) constitute a THUMP domain. ATP is bound by residues 185–186 (LI), lysine 267, glycine 289, and glutamine 298. Cysteine 346 and cysteine 458 are oxidised to a cystine. The Rhodanese domain occupies 406-484 (INSGEVIIDV…GYDNVKVYRP (79 aa)). Cysteine 458 (cysteine persulfide intermediate) is an active-site residue.

The protein belongs to the ThiI family.

It localises to the cytoplasm. The enzyme catalyses [ThiI sulfur-carrier protein]-S-sulfanyl-L-cysteine + a uridine in tRNA + 2 reduced [2Fe-2S]-[ferredoxin] + ATP + H(+) = [ThiI sulfur-carrier protein]-L-cysteine + a 4-thiouridine in tRNA + 2 oxidized [2Fe-2S]-[ferredoxin] + AMP + diphosphate. It catalyses the reaction [ThiS sulfur-carrier protein]-C-terminal Gly-Gly-AMP + S-sulfanyl-L-cysteinyl-[cysteine desulfurase] + AH2 = [ThiS sulfur-carrier protein]-C-terminal-Gly-aminoethanethioate + L-cysteinyl-[cysteine desulfurase] + A + AMP + 2 H(+). Its pathway is cofactor biosynthesis; thiamine diphosphate biosynthesis. Catalyzes the ATP-dependent transfer of a sulfur to tRNA to produce 4-thiouridine in position 8 of tRNAs, which functions as a near-UV photosensor. Also catalyzes the transfer of sulfur to the sulfur carrier protein ThiS, forming ThiS-thiocarboxylate. This is a step in the synthesis of thiazole, in the thiamine biosynthesis pathway. The sulfur is donated as persulfide by IscS. The polypeptide is tRNA sulfurtransferase (Shewanella woodyi (strain ATCC 51908 / MS32)).